A 611-amino-acid polypeptide reads, in one-letter code: Beta-hexosaminidase (611 aa).

It belongs to the glycosyl hydrolase 20 family. In terms of assembly, homodimer.

It localises to the periplasm. It carries out the reaction Hydrolysis of terminal non-reducing N-acetyl-D-hexosamine residues in N-acetyl-beta-D-hexosaminides.. It functions in the pathway glycan degradation; chitin degradation. With respect to regulation, inhibited by mercuric ions, PNP-beta-Glc, PNP-beta-Gal, PNP-alpha-GlcNAc, and PNP-beta-S-GlcNAc. Functionally, hydrolyzes aryl-N-acetyl-beta-D-glucosaminide (aryl-beta-GlcNAc), aryl-beta-GalNAc and chitin oligosaccharides. Can hydrolyze rapidly the artificial substrates p-nitrophenyl-N-acetyl-beta-D-glucosaminide (PNP-beta-GlcNAc) and 4-methylumbelliferyl-beta-GlcNAc, and is slightly active on p-nitrophenyl-beta-GalNAc. This enzyme is not processive, i.e. when it hydrolyzes (GlcNAc)n, both products, (Glc-NAc)n-1 and the terminal GlcNAc, are released before the enzyme attacks a second molecule of (GlcNAc)n or (GlcNAc)n-1. In Vibrio furnissii, this protein is Beta-hexosaminidase.